The primary structure comprises 670 residues: Sodium/potassium/calcium exchanger 2 (670 aa).

Over 1–38 (MDLHQSATVRLLQEWCSHESPSGCRRHYNTRKKLKLIR) the chain is Cytoplasmic. Residues 39-59 (VIGLVMGLVAVSTVPFSISAF) traverse the membrane as a helical segment. Residues 60–133 (TETYSQNNRG…DVFSLEERRK (74 aa)) are Extracellular-facing. Disordered regions lie at residues 67 to 86 (NRGE…HRQR) and 91 to 122 (LNDK…GDYP). Positions 106–122 (QEDRSENGTDHAQGDYP) are enriched in basic and acidic residues. N-linked (GlcNAc...) asparagine glycosylation occurs at Asn112. A helical membrane pass occupies residues 134–154 (GAIILHVIGMIYMFIALAIVC). The Cytoplasmic segment spans residues 155–179 (DEFFVPSLTVITEKLGISDDVAGAT). The stretch at 175–215 (VAGATFMAAGGSAPELFTSLIGVFIAHSNVGIGTIVGSAVF) is one Alpha-1 repeat. Residues 180–200 (FMAAGGSAPELFTSLIGVFIA) form a helical membrane-spanning segment. Topologically, residues 201–205 (HSNVG) are extracellular. A helical membrane pass occupies residues 206–226 (IGTIVGSAVFNILFVIGMCAL). Residues 227–244 (FSREILNLTWWPLFRDVS) are Cytoplasmic-facing. Residues 245 to 265 (FYIVDLIMLIIFFLDNVIMWW) traverse the membrane as a helical segment. A topological domain (extracellular) is located at residue Glu266. The chain crosses the membrane as a helical span at residues 267-287 (SLLLLTAYFAYVVFMKFNVQV). Over 288-506 (ERWVKQMINR…PDVRKPASKK (219 aa)) the chain is Cytoplasmic. Residues 312–335 (ASTAGDKEEPTLPNKPRLQRGGSS) are disordered. Residues Ser337 and Ser341 each carry the phosphoserine modification. 2 disordered regions span residues 394 to 414 (KCQV…DYAA) and 450 to 471 (AADA…LSLS). The chain crosses the membrane as a helical span at residues 507–527 (FFPITFFGSITWIAVFSYLMV). Residues 528–542 (WWAHQVGETIGISEE) are Extracellular-facing. A helical membrane pass occupies residues 543 to 563 (IMGLTILAAGTSIPDLITSVI). One copy of the Alpha-2 repeat lies at 550–581 (AAGTSIPDLITSVIVARKGLGDMAVSSSVGSN). The Cytoplasmic portion of the chain corresponds to 564–578 (VARKGLGDMAVSSSV). The chain crosses the membrane as a helical span at residues 579–599 (GSNIFDITVGLPLPWLLYTII). The Extracellular portion of the chain corresponds to 600–611 (HRFKPVTVSSNG). Residues 612–632 (LFCAIVLLFIMLIFVILSIAL) form a helical membrane-spanning segment. Topologically, residues 633–639 (CKWRMNK) are cytoplasmic. Residues 640–660 (ILGFIMFGLYFAFLVVSVLLE) form a helical membrane-spanning segment. Topologically, residues 661–670 (DKVLECPVSI) are extracellular.

The protein belongs to the Ca(2+):cation antiporter (CaCA) (TC 2.A.19) family. SLC24A subfamily. Expressed abundantly in all regions of the brain and weakly in the eye, large intestine and adrenal tissue.

It is found in the cell membrane. It catalyses the reaction Ca(2+)(out) + K(+)(out) + 4 Na(+)(in) = Ca(2+)(in) + K(+)(in) + 4 Na(+)(out). Calcium, potassium:sodium antiporter that transports 1 Ca(2+) and 1 K(+) in exchange for 4 Na(+). Required for learming and memory by regulating neuronal Ca(2+), which is essential for the development of synaptic plasticity. This Rattus norvegicus (Rat) protein is Sodium/potassium/calcium exchanger 2 (Slc24a2).